The primary structure comprises 90 residues: WAP four-disulfide core domain protein 12 (90 aa).

A signal peptide spans 1-23 (MGSSSFLVLMVSLALVTLVAVEG). A WAP domain is found at 27 to 74 (GIEKAGVCPADNVRCFKSDPPQCHTDQDCLGERKCCYLHCGFKCVIPV). Intrachain disulfides connect cysteine 34–cysteine 62, cysteine 41–cysteine 66, cysteine 49–cysteine 61, and cysteine 55–cysteine 70.

Its subcellular location is the secreted. Functionally, antibacterial protein. Putative acid-stable proteinase inhibitor. In Gorilla gorilla gorilla (Western lowland gorilla), this protein is WAP four-disulfide core domain protein 12 (WFDC12).